Reading from the N-terminus, the 805-residue chain is Sucrose synthase (805 aa).

Positions methionine 275 to threonine 752 are GT-B glycosyltransferase.

It belongs to the glycosyltransferase 1 family. Plant sucrose synthase subfamily.

The catalysed reaction is an NDP-alpha-D-glucose + D-fructose = a ribonucleoside 5'-diphosphate + sucrose + H(+). Functionally, sucrose-cleaving enzyme that provides UDP-glucose and fructose for various metabolic pathways. This Vigna radiata var. radiata (Mung bean) protein is Sucrose synthase (SS1).